The chain runs to 335 residues: POU domain, class 5, transcription factor 2 (335 aa).

Positions 1-23 (MAGRRSSNVCPFPGNSGGGLEGP) are disordered. Residues 113-187 (DVSAIQKEME…LLKMWLEEVD (75 aa)) enclose the POU-specific domain. A DNA-binding region (homeobox) is located at residues 205-264 (RKRRRASRERRIGSNLEKLFLQCPEPTPQQISYIAGRLRLQKDLVQVWFSNRSQMAGWPT).

It belongs to the POU transcription factor family. Class-5 subfamily. In terms of tissue distribution, highly restricted to adult testis.

It is found in the nucleus. In terms of biological role, transcription factor that binds preferentially to the octamer motif (5'-ATGTTAAT-3'). May exert a regulatory function in meiotic events that are required for terminal differentiation of male germ cell. The chain is POU domain, class 5, transcription factor 2 (Pou5f2) from Rattus norvegicus (Rat).